Reading from the N-terminus, the 294-residue chain is Ribosomal protein L11 methyltransferase (294 aa).

S-adenosyl-L-methionine contacts are provided by Thr-145, Gly-166, Asp-188, and Asn-230.

The protein belongs to the methyltransferase superfamily. PrmA family.

It localises to the cytoplasm. The enzyme catalyses L-lysyl-[protein] + 3 S-adenosyl-L-methionine = N(6),N(6),N(6)-trimethyl-L-lysyl-[protein] + 3 S-adenosyl-L-homocysteine + 3 H(+). Functionally, methylates ribosomal protein L11. The chain is Ribosomal protein L11 methyltransferase from Glaesserella parasuis serovar 5 (strain SH0165) (Haemophilus parasuis).